Here is a 147-residue protein sequence, read N- to C-terminus: Cytochrome c-type biogenesis protein CcmE (147 aa).

The Cytoplasmic segment spans residues 1–9 (MKSLKKQRR). A helical; Signal-anchor for type II membrane protein membrane pass occupies residues 10 to 30 (IQIIALATVALVGSTALIGYA). At 31–147 (MRDGINYFRS…EQGVYREGDS (117 aa)) the chain is on the periplasmic side. H123 and Y127 together coordinate heme.

Belongs to the CcmE/CycJ family.

The protein localises to the cell inner membrane. Heme chaperone required for the biogenesis of c-type cytochromes. Transiently binds heme delivered by CcmC and transfers the heme to apo-cytochromes in a process facilitated by CcmF and CcmH. This chain is Cytochrome c-type biogenesis protein CcmE, found in Ruegeria sp. (strain TM1040) (Silicibacter sp.).